Here is a 200-residue protein sequence, read N- to C-terminus: Pyridoxamine 5'-phosphate oxidase homolog (200 aa).

Positions 60, 68, and 125 each coordinate FMN.

Belongs to the pyridoxamine 5'-phosphate oxidase family. It depends on FMN as a cofactor.

It is found in the cytoplasm. Its subcellular location is the nucleus. In Saccharomyces cerevisiae (strain ATCC 204508 / S288c) (Baker's yeast), this protein is Pyridoxamine 5'-phosphate oxidase homolog.